The sequence spans 272 residues: Lectin-like protein At1g53070 (272 aa).

A signal peptide spans 1–23 (MKIQILCFTTLFLAIFTSQVTTA). Positions 24 to 271 (YKFKFDYFGN…RHEIWDWTFQ (248 aa)) are legume-lectin like. N33, N84, and N134 each carry an N-linked (GlcNAc...) asparagine glycan. At S241 the chain carries Phosphoserine.

The protein belongs to the leguminous lectin family.

The protein resides in the secreted. The protein localises to the extracellular space. It is found in the apoplast. This Arabidopsis thaliana (Mouse-ear cress) protein is Lectin-like protein At1g53070.